A 215-amino-acid chain; its full sequence is Vesicle transport protein SFT2C (215 aa).

The Cytoplasmic portion of the chain corresponds to 1-82 (MADLHRQLQE…RGQRLAAGGG (82 aa)). Residues 83 to 103 (CLLLAALCFGLAALYAPVLLL) form a helical membrane-spanning segment. The Lumenal portion of the chain corresponds to 104–107 (RARK). Residues 108–128 (FALLWSLGSALALAGSALLRG) traverse the membrane as a helical segment. The Cytoplasmic portion of the chain corresponds to 129 to 142 (GAACGRLLRCEEAP). The helical transmembrane segment at 143-163 (SRPALLYMAALGATLFAALGL) threads the bilayer. Over 164 to 166 (RST) the chain is Lumenal. The chain crosses the membrane as a helical span at residues 167-187 (LLTVLGAGAQVAALLAALVGL). Residues 188–215 (LPWGGGTALRLALGRLGRGAGLAKVLPV) are Cytoplasmic-facing.

The protein belongs to the SFT2 family.

The protein localises to the membrane. Functionally, may be involved in fusion of retrograde transport vesicles derived from an endocytic compartment with the Golgi complex. The polypeptide is Vesicle transport protein SFT2C (Homo sapiens (Human)).